Consider the following 193-residue polypeptide: Acyl carrier protein phosphodiesterase (193 aa).

This sequence belongs to the AcpH family.

The catalysed reaction is holo-[ACP] + H2O = apo-[ACP] + (R)-4'-phosphopantetheine + H(+). Its function is as follows. Converts holo-ACP to apo-ACP by hydrolytic cleavage of the phosphopantetheine prosthetic group from ACP. The polypeptide is Acyl carrier protein phosphodiesterase (Yersinia enterocolitica serotype O:8 / biotype 1B (strain NCTC 13174 / 8081)).